The following is a 710-amino-acid chain: MSMRIPKAASVNDEQHQRIIKYGRALVLDIVEQYGGGHPGSAMGAMAIGIALWKYTLKYAPNDPNYFNRDRFVLSNGHVCLFQYIFQHLYGLKSMTMAQLKSYHSNDFHSLCPGHPEIEHDAVEVTTGPLGQGISNSVGLAIATKNLAATYNKPGFDIITNKVYCMVGDACLQEGPALESISLAGHMGLDNLIVLYDNNQVCCDGSVDIANTEDISAKFKACNWNVIEVENASEDVATIVKALEYAQAEKHRPTLINCRTVIGSGAAFENHCAAHGNALGEDGVRELKIKYGMNPAQKFYIPQDVYDFFKEKPAEGDKLVAEWKSLVAKYVKAYPEEGQEFLARMRGELPKNWKSFLPQQEFTGDAPTRAAARELVRALGQNCKSVIAGCADLSVSVNLQWPGVKYFMDPSLSTQCGLSGDYSGRYIEYGIREHAMCAIANGLAAYNKGTFLPITSTFFMFYLYAAPAIRMAGLQELKAIHIGTHDSINEGENGPTHQPVESPALFRAMPNIYYMRPVDSAEVFGLFQKAVELPFSSILSLSRNEVLQYPGKSSAEKAQRGGYILEDAENAEVQIIGVGAEMEFAYKAAKILGRKFRTRVLSIPCTRLFDEQSIGYRRSVLRKDGRQVPTVVVDGHVAFGWERYATASYCMNTYGKSLPPEVIYEYFGYNPATIAKKVEAYVRACQRDPLLLHDFLDLKEKPNHDKVNKL.

Residues His78 and 128–130 (GPL) contribute to the thiamine diphosphate site. Mg(2+)-binding residues include Asp169, Asn199, and Val201. Asn199 contributes to the thiamine diphosphate binding site. Thiamine diphosphate is bound by residues His275, Glu433, and Phe461. The active-site Proton donor is the Glu433. The Microbody targeting signal signature appears at 708–710 (NKL).

This sequence belongs to the transketolase family. The cofactor is Mg(2+). It depends on Ca(2+) as a cofactor. Requires Mn(2+) as cofactor. Co(2+) is required as a cofactor. Thiamine diphosphate serves as cofactor.

It is found in the peroxisome. It catalyses the reaction D-xylulose 5-phosphate + formaldehyde = dihydroxyacetone + D-glyceraldehyde 3-phosphate. Its function is as follows. This is the major methanol assimilatory enzyme from the methylotrophic Hansenula polymorpha. The protein is Dihydroxyacetone synthase (DAS) of Pichia angusta (Yeast).